Reading from the N-terminus, the 185-residue chain is Endoribonuclease YbeY (185 aa).

Positions 135, 139, and 145 each coordinate Zn(2+).

The protein belongs to the endoribonuclease YbeY family. Zn(2+) is required as a cofactor.

It localises to the cytoplasm. Functionally, single strand-specific metallo-endoribonuclease involved in late-stage 70S ribosome quality control and in maturation of the 3' terminus of the 16S rRNA. This chain is Endoribonuclease YbeY, found in Parasynechococcus marenigrum (strain WH8102).